The following is a 280-amino-acid chain: Bifunctional protein FolD (280 aa).

NADP(+) contacts are provided by residues 166 to 168 (GRS) and Ser191.

The protein belongs to the tetrahydrofolate dehydrogenase/cyclohydrolase family. Homodimer.

It catalyses the reaction (6R)-5,10-methylene-5,6,7,8-tetrahydrofolate + NADP(+) = (6R)-5,10-methenyltetrahydrofolate + NADPH. The enzyme catalyses (6R)-5,10-methenyltetrahydrofolate + H2O = (6R)-10-formyltetrahydrofolate + H(+). Its pathway is one-carbon metabolism; tetrahydrofolate interconversion. Functionally, catalyzes the oxidation of 5,10-methylenetetrahydrofolate to 5,10-methenyltetrahydrofolate and then the hydrolysis of 5,10-methenyltetrahydrofolate to 10-formyltetrahydrofolate. In Marinomonas sp. (strain MWYL1), this protein is Bifunctional protein FolD.